We begin with the raw amino-acid sequence, 29 residues long: Trypsin inhibitor 1 (29 aa).

3 disulfides stabilise this stretch: Cys-3/Cys-20, Cys-10/Cys-22, and Cys-16/Cys-28.

The protein belongs to the protease inhibitor I7 (squash-type serine protease inhibitor) family.

It localises to the secreted. In terms of biological role, inhibits trypsin. The protein is Trypsin inhibitor 1 of Momordica repens.